A 245-amino-acid chain; its full sequence is tRNA1(Val) (adenine(37)-N6)-methyltransferase (245 aa).

This sequence belongs to the methyltransferase superfamily. tRNA (adenine-N(6)-)-methyltransferase family.

It localises to the cytoplasm. The enzyme catalyses adenosine(37) in tRNA1(Val) + S-adenosyl-L-methionine = N(6)-methyladenosine(37) in tRNA1(Val) + S-adenosyl-L-homocysteine + H(+). Its function is as follows. Specifically methylates the adenine in position 37 of tRNA(1)(Val) (anticodon cmo5UAC). The protein is tRNA1(Val) (adenine(37)-N6)-methyltransferase of Erwinia tasmaniensis (strain DSM 17950 / CFBP 7177 / CIP 109463 / NCPPB 4357 / Et1/99).